A 141-amino-acid chain; its full sequence is MAKKVVGEIKLQIAATKANPSPPVGPALGQQGVNIMEFCKAFNERTKDMAGFNIPVVITVYADKSFTFITKQPPATDLIKKAAGISKGTDNPLKNKVGKLTRAQVLEIVDKKIADLNTKDRDQAAKIIAGSARSMGVEIVD.

This sequence belongs to the universal ribosomal protein uL11 family. Part of the ribosomal stalk of the 50S ribosomal subunit. Interacts with L10 and the large rRNA to form the base of the stalk. L10 forms an elongated spine to which L12 dimers bind in a sequential fashion forming a multimeric L10(L12)X complex. In terms of processing, one or more lysine residues are methylated.

In terms of biological role, forms part of the ribosomal stalk which helps the ribosome interact with GTP-bound translation factors. The protein is Large ribosomal subunit protein uL11 of Campylobacter jejuni subsp. jejuni serotype O:6 (strain 81116 / NCTC 11828).